A 97-amino-acid polypeptide reads, in one-letter code: uncharacterized protein (97 aa).

Positions M1–D24 are enriched in basic and acidic residues. The tract at residues M1 to D97 is disordered. Residues S31 to Q43 show a composition bias toward low complexity. Positions T44–T53 are enriched in basic and acidic residues.

This is an uncharacterized protein from Bacillus subtilis (strain 168).